Reading from the N-terminus, the 370-residue chain is A-type ATP synthase subunit C (370 aa).

This sequence belongs to the V-ATPase V0D/AC39 subunit family. In terms of assembly, has multiple subunits with at least A(3), B(3), C, D, E, F, H, I and proteolipid K(x).

The protein resides in the cell membrane. Functionally, component of the A-type ATP synthase that produces ATP from ADP in the presence of a proton gradient across the membrane. This is A-type ATP synthase subunit C from Pyrococcus furiosus (strain ATCC 43587 / DSM 3638 / JCM 8422 / Vc1).